Consider the following 651-residue polypeptide: Receptor-like serine/threonine-protein kinase At4g25390 (651 aa).

The signal sequence occupies residues 1–25 (MPSRSISAPVPVLAPAPIVSSLVPA). Residues 26–40 (APSGHQNKTTRIFPP) are Extracellular-facing. Asn-32 carries N-linked (GlcNAc...) asparagine glycosylation. A helical transmembrane segment spans residues 41-61 (FVVAGAGAGFSLFITLSVCFC). Residues 62–651 (KFSRKRSSPP…PLKTTRKQRR (590 aa)) lie on the Cytoplasmic side of the membrane. The interval 66-87 (KRSSPPAENASSSPRRPSPREF) is disordered. Low complexity predominate over residues 69–87 (SPPAENASSSPRRPSPREF). The region spanning 99-633 (FSQANRLGQG…LKGEVNLPEL (535 aa)) is the Protein kinase domain. ATP contacts are provided by residues 105-113 (LGQGGFGVV) and Lys-127. Catalysis depends on Asp-225, which acts as the Proton acceptor.

It belongs to the protein kinase superfamily. Ser/Thr protein kinase family.

It is found in the cell membrane. The enzyme catalyses L-seryl-[protein] + ATP = O-phospho-L-seryl-[protein] + ADP + H(+). It catalyses the reaction L-threonyl-[protein] + ATP = O-phospho-L-threonyl-[protein] + ADP + H(+). This is Receptor-like serine/threonine-protein kinase At4g25390 from Arabidopsis thaliana (Mouse-ear cress).